Reading from the N-terminus, the 58-residue chain is Small ribosomal subunit protein bS21 (58 aa).

The segment at 39 to 58 (DKPSVKKRAKSKAAAKYRSR) is disordered. Residues 43–58 (VKKRAKSKAAAKYRSR) are compositionally biased toward basic residues.

It belongs to the bacterial ribosomal protein bS21 family.

This is Small ribosomal subunit protein bS21 (rpsU) from Chlamydia pneumoniae (Chlamydophila pneumoniae).